The following is a 108-amino-acid chain: Thiosulfate sulfurtransferase GlpE (108 aa).

In terms of domain architecture, Rhodanese spans 18 to 106; sequence QNEDAVLVDI…WVRSELPIEL (89 aa). Cys-66 acts as the Cysteine persulfide intermediate in catalysis.

The protein belongs to the GlpE family.

The protein resides in the cytoplasm. It carries out the reaction thiosulfate + hydrogen cyanide = thiocyanate + sulfite + 2 H(+). The enzyme catalyses thiosulfate + [thioredoxin]-dithiol = [thioredoxin]-disulfide + hydrogen sulfide + sulfite + 2 H(+). Its function is as follows. Transferase that catalyzes the transfer of sulfur from thiosulfate to thiophilic acceptors such as cyanide or dithiols. May function in a CysM-independent thiosulfate assimilation pathway by catalyzing the conversion of thiosulfate to sulfite, which can then be used for L-cysteine biosynthesis. The sequence is that of Thiosulfate sulfurtransferase GlpE from Glaesserella parasuis serovar 5 (strain SH0165) (Haemophilus parasuis).